The following is a 213-amino-acid chain: Pyridoxine/pyridoxamine 5'-phosphate oxidase (213 aa).

Substrate is bound by residues 8-11 (RREY) and K67. Residues 62–67 (RIVLLK), 77–78 (FT), R83, K84, and Q106 each bind FMN. Positions 124, 128, and 132 each coordinate substrate. FMN contacts are provided by residues 141–142 (QS) and W186. 192–194 (RLH) contacts substrate. Position 196 (R196) interacts with FMN.

Belongs to the pyridoxamine 5'-phosphate oxidase family. In terms of assembly, homodimer. The cofactor is FMN.

The enzyme catalyses pyridoxamine 5'-phosphate + O2 + H2O = pyridoxal 5'-phosphate + H2O2 + NH4(+). The catalysed reaction is pyridoxine 5'-phosphate + O2 = pyridoxal 5'-phosphate + H2O2. It functions in the pathway cofactor metabolism; pyridoxal 5'-phosphate salvage; pyridoxal 5'-phosphate from pyridoxamine 5'-phosphate: step 1/1. It participates in cofactor metabolism; pyridoxal 5'-phosphate salvage; pyridoxal 5'-phosphate from pyridoxine 5'-phosphate: step 1/1. Catalyzes the oxidation of either pyridoxine 5'-phosphate (PNP) or pyridoxamine 5'-phosphate (PMP) into pyridoxal 5'-phosphate (PLP). In Shewanella sediminis (strain HAW-EB3), this protein is Pyridoxine/pyridoxamine 5'-phosphate oxidase.